The following is a 142-amino-acid chain: Large-conductance mechanosensitive channel (142 aa).

Transmembrane regions (helical) follow at residues 15 to 35 (AFVM…GAAF), 38 to 58 (IVTS…IGNI), and 82 to 102 (GMFI…FVAI).

It belongs to the MscL family. In terms of assembly, homopentamer.

Its subcellular location is the cell inner membrane. Channel that opens in response to stretch forces in the membrane lipid bilayer. May participate in the regulation of osmotic pressure changes within the cell. This is Large-conductance mechanosensitive channel from Fusobacterium nucleatum subsp. nucleatum (strain ATCC 25586 / DSM 15643 / BCRC 10681 / CIP 101130 / JCM 8532 / KCTC 2640 / LMG 13131 / VPI 4355).